Consider the following 211-residue polypeptide: FMN-dependent NADH:quinone oxidoreductase 2 (211 aa).

102 to 105 (MWNF) is an FMN binding site.

The protein belongs to the azoreductase type 1 family. Homodimer. It depends on FMN as a cofactor.

It carries out the reaction 2 a quinone + NADH + H(+) = 2 a 1,4-benzosemiquinone + NAD(+). The catalysed reaction is N,N-dimethyl-1,4-phenylenediamine + anthranilate + 2 NAD(+) = 2-(4-dimethylaminophenyl)diazenylbenzoate + 2 NADH + 2 H(+). In terms of biological role, quinone reductase that provides resistance to thiol-specific stress caused by electrophilic quinones. Its function is as follows. Also exhibits azoreductase activity. Catalyzes the reductive cleavage of the azo bond in aromatic azo compounds to the corresponding amines. The sequence is that of FMN-dependent NADH:quinone oxidoreductase 2 from Bacillus thuringiensis subsp. konkukian (strain 97-27).